The following is a 179-amino-acid chain: Large ribosomal subunit protein uL5 (179 aa).

The protein belongs to the universal ribosomal protein uL5 family. Part of the 50S ribosomal subunit; part of the 5S rRNA/L5/L18/L25 subcomplex. Contacts the 5S rRNA and the P site tRNA. Forms a bridge to the 30S subunit in the 70S ribosome.

In terms of biological role, this is one of the proteins that bind and probably mediate the attachment of the 5S RNA into the large ribosomal subunit, where it forms part of the central protuberance. In the 70S ribosome it contacts protein S13 of the 30S subunit (bridge B1b), connecting the 2 subunits; this bridge is implicated in subunit movement. Contacts the P site tRNA; the 5S rRNA and some of its associated proteins might help stabilize positioning of ribosome-bound tRNAs. This chain is Large ribosomal subunit protein uL5, found in Trichlorobacter lovleyi (strain ATCC BAA-1151 / DSM 17278 / SZ) (Geobacter lovleyi).